The sequence spans 269 residues: Hydroxyethylthiazole kinase (269 aa).

Position 45 (Met45) interacts with substrate. Residues Arg121 and Thr167 each coordinate ATP. Gly194 is a binding site for substrate.

It belongs to the Thz kinase family. Mg(2+) is required as a cofactor.

The enzyme catalyses 5-(2-hydroxyethyl)-4-methylthiazole + ATP = 4-methyl-5-(2-phosphooxyethyl)-thiazole + ADP + H(+). It functions in the pathway cofactor biosynthesis; thiamine diphosphate biosynthesis; 4-methyl-5-(2-phosphoethyl)-thiazole from 5-(2-hydroxyethyl)-4-methylthiazole: step 1/1. Its function is as follows. Catalyzes the phosphorylation of the hydroxyl group of 4-methyl-5-beta-hydroxyethylthiazole (THZ). The polypeptide is Hydroxyethylthiazole kinase (Brevibacillus brevis (strain 47 / JCM 6285 / NBRC 100599)).